A 1193-amino-acid chain; its full sequence is DNA-directed RNA polymerase subunit beta (1193 aa).

The segment covering 1153-1162 (EMRDLEDDED) has biased composition (acidic residues). The tract at residues 1153–1193 (EMRDLEDDEDAKQNEGLSLPNDEESEELVSADAERDVVTKE) is disordered. The segment covering 1184-1193 (DAERDVVTKE) has biased composition (basic and acidic residues).

This sequence belongs to the RNA polymerase beta chain family. In terms of assembly, the RNAP catalytic core consists of 2 alpha, 1 beta, 1 beta' and 1 omega subunit. When a sigma factor is associated with the core the holoenzyme is formed, which can initiate transcription.

It carries out the reaction RNA(n) + a ribonucleoside 5'-triphosphate = RNA(n+1) + diphosphate. In terms of biological role, DNA-dependent RNA polymerase catalyzes the transcription of DNA into RNA using the four ribonucleoside triphosphates as substrates. In Bacillus licheniformis (strain ATCC 14580 / DSM 13 / JCM 2505 / CCUG 7422 / NBRC 12200 / NCIMB 9375 / NCTC 10341 / NRRL NRS-1264 / Gibson 46), this protein is DNA-directed RNA polymerase subunit beta.